A 445-amino-acid polypeptide reads, in one-letter code: MSNRKYFGTDGIRGRVGDAPITPDFVLKLGWAAGKVLARHGSRKIIIGKDTRISGYMLESALEAGLAAAGLSALFTGPMPTPAVAYLTRTFRAEAGIVISASHNPFYDNGIKFFSIDGTKLPDAVEEAIEAEMEKEISCVDSAELGKASRIVDAAGRYIEFCKATFPNELSLSELKIVVDCANGATYHIAPNVLRELGANVIAIGCEPNGVNINAEVGATDVRALQARVLAEKADLGIAFDGDGDRVIMVDHEGNKVDGDQIMYIIAREGLRQGQLRGGAVGTLMSNMGLELALKQLGIPFARAKVGDRYVLEKMQEKGWRIGAENSGHVILLDKTTTGDGIVAGLQVLAAMARNHMSLHDLCSGMKMFPQILVNVRYTADSGDPLEHESVKAVTAEVEAALGSRGRVLLRKSGTEPLIRVMVEGEDEAQVTEFAHRIADAVKAV.

Catalysis depends on Ser-102, which acts as the Phosphoserine intermediate. Positions 102, 241, 243, and 245 each coordinate Mg(2+). Ser-102 is subject to Phosphoserine.

This sequence belongs to the phosphohexose mutase family. Mg(2+) serves as cofactor. Activated by phosphorylation.

It catalyses the reaction alpha-D-glucosamine 1-phosphate = D-glucosamine 6-phosphate. Catalyzes the conversion of glucosamine-6-phosphate to glucosamine-1-phosphate. The sequence is that of Phosphoglucosamine mutase from Escherichia coli O7:K1 (strain IAI39 / ExPEC).